We begin with the raw amino-acid sequence, 92 residues long: DNA-directed RNA polymerase subunit omega (92 aa).

Belongs to the RNA polymerase subunit omega family. In terms of assembly, the RNAP catalytic core consists of 2 alpha, 1 beta, 1 beta' and 1 omega subunit. When a sigma factor is associated with the core the holoenzyme is formed, which can initiate transcription.

The catalysed reaction is RNA(n) + a ribonucleoside 5'-triphosphate = RNA(n+1) + diphosphate. Functionally, promotes RNA polymerase assembly. Latches the N- and C-terminal regions of the beta' subunit thereby facilitating its interaction with the beta and alpha subunits. This Shewanella sp. (strain ANA-3) protein is DNA-directed RNA polymerase subunit omega.